A 716-amino-acid chain; its full sequence is Myogenesis-regulating glycosidase (716 aa).

The span at 1–11 (MSQNLQETSQA) shows a compositional bias: polar residues. The disordered stretch occupies residues 1-26 (MSQNLQETSQAYPRHRPGSHAGPKSL). Topologically, residues 1–55 (MSQNLQETSQAYPRHRPGSHAGPKSLKVTPRATMYTFLPDNFSPAKPKPTKELRP) are cytoplasmic. The chain crosses the membrane as a helical; Signal-anchor for type II membrane protein span at residues 56 to 76 (LLCSAVLGLLLVLAAVVAWCY). Topologically, residues 77-716 (YSASLRKAER…DEVAYFTWAS (640 aa)) are extracellular. 3 N-linked (GlcNAc...) asparagine glycosylation sites follow: Asn-239, Asn-249, and Asn-455. Residues Asp-462 and Glu-465 contribute to the active site. Asp-527 serves as the catalytic Proton donor.

This sequence belongs to the glycosyl hydrolase 31 family. As to quaternary structure, interacts with IGF2; this interaction is required for IGF2 secretion. Expressed in brain, liver, spleen, skeletal muscle, heart, lung and kidney. High expression is observed in the cerebellum, specifically in astrocytes. Highly expressed in skeletal muscle (at protein level).

It is found in the nucleus membrane. Its subcellular location is the endoplasmic reticulum membrane. Putative glycosidase. Promotes myogenesis by activating AKT signaling through the maturation and secretion of IGF2. The protein is Myogenesis-regulating glycosidase (Myorg) of Mus musculus (Mouse).